The sequence spans 364 residues: Probable UDP-arabinopyranose mutase 1 (364 aa).

A DXD motif motif is present at residues 110–112 (DDD). Arg-158 carries an N-linked (Glc...) arginine glycan.

It belongs to the RGP family. In terms of assembly, homopentamer or homohexamer. Mn(2+) serves as cofactor. Mg(2+) is required as a cofactor. Reversibly glycosylated by UDP-glucose, UDP-xylose and UDP-galactose.

Its subcellular location is the secreted. It localises to the cell wall. The protein localises to the cell junction. It is found in the plasmodesma. The protein resides in the golgi apparatus. It carries out the reaction UDP-beta-L-arabinofuranose = UDP-beta-L-arabinopyranose. Functionally, probable UDP-L-arabinose mutase involved in the biosynthesis of cell wall non-cellulosic polysaccharides. Was initially shown to possess an autoglycosylating activity which is dependent on the presence of UDP-glucose and manganese. The sequence is that of Probable UDP-arabinopyranose mutase 1 from Zea mays (Maize).